A 138-amino-acid chain; its full sequence is Large ribosomal subunit protein uL16 (138 aa).

Belongs to the universal ribosomal protein uL16 family. In terms of assembly, part of the 50S ribosomal subunit.

In terms of biological role, binds 23S rRNA and is also seen to make contacts with the A and possibly P site tRNAs. This chain is Large ribosomal subunit protein uL16, found in Anaeromyxobacter dehalogenans (strain 2CP-1 / ATCC BAA-258).